The primary structure comprises 191 residues: Cdc42 homolog (191 aa).

Residue 10 to 17 (GDGAVGKT) coordinates GTP. The short motif at 32–40 (YVPTVFDNY) is the Effector region element. GTP contacts are provided by residues 57-61 (DTAGQ) and 115-118 (TQID). Cys188 is modified (cysteine methyl ester). Cys188 carries the S-geranylgeranyl cysteine lipid modification. Residues 189–191 (KFL) constitute a propeptide, removed in mature form.

The protein belongs to the small GTPase superfamily. Rho family. CDC42 subfamily.

The protein localises to the cell junction. It localises to the adherens junction. The protein resides in the cell membrane. The catalysed reaction is GTP + H2O = GDP + phosphate + H(+). Its function is as follows. Regulates mbt kinase activity and is also required to recruit mbt to adherens junctions. Together with mbt, regulates photoreceptor cell morphogenesis. The polypeptide is Cdc42 homolog (Drosophila pseudoobscura pseudoobscura (Fruit fly)).